A 459-amino-acid polypeptide reads, in one-letter code: MSTNPPDLRPDLAPKARLTQPDRPGQPTIGMVSLGCPKALVDSERILTRLRAEGYGISPDYDGADAVIVNTCGFLDSAKAESLSAIGEALNENGRVIVTGCLGAEPEYITGAHPKVLAVTGPQQYEQVLDAVHAAVPPSPDPFVDLLPATAVSLTPRHFSYLKISEGCNHKCKFCIIPDMRGRLASRPAHAVMREAEKLVDNGVRELLVISQDTSAFGVDIKHAEERGHRAHITDLARDLGSLGAWVRLHYVYPYPHVRQLIPLMADGLVLPYLDIPFQHAHPDVLRRMARPAAAAKTLDEIAAWRAICPDLTLRSTFIVGYPGETEEEFQTLLDWLDEAQLDRVGCFQYENVAGARSNALPDHVPEDVKQDRWNRFMAKSQDISEAKLAAKVAQRLEVIVDEVDADAATCRTKADAPEIDGNLFIDDGHDGLKPGDIVTVEVDEAGEYDLWGRLAPSA.

The interval 1–28 (MSTNPPDLRPDLAPKARLTQPDRPGQPT) is disordered. In terms of domain architecture, MTTase N-terminal spans 27–137 (PTIGMVSLGC…VLDAVHAAVP (111 aa)). [4Fe-4S] cluster-binding residues include Cys36, Cys72, Cys101, Cys168, Cys172, and Cys175. The Radical SAM core domain occupies 154 to 387 (LTPRHFSYLK…MAKSQDISEA (234 aa)). The 68-residue stretch at 390 to 457 (AAKVAQRLEV…EYDLWGRLAP (68 aa)) folds into the TRAM domain.

The protein belongs to the methylthiotransferase family. RimO subfamily. [4Fe-4S] cluster serves as cofactor.

Its subcellular location is the cytoplasm. The enzyme catalyses L-aspartate(89)-[ribosomal protein uS12]-hydrogen + (sulfur carrier)-SH + AH2 + 2 S-adenosyl-L-methionine = 3-methylsulfanyl-L-aspartate(89)-[ribosomal protein uS12]-hydrogen + (sulfur carrier)-H + 5'-deoxyadenosine + L-methionine + A + S-adenosyl-L-homocysteine + 2 H(+). Functionally, catalyzes the methylthiolation of an aspartic acid residue of ribosomal protein uS12. This is Ribosomal protein uS12 methylthiotransferase RimO from Roseobacter denitrificans (strain ATCC 33942 / OCh 114) (Erythrobacter sp. (strain OCh 114)).